Consider the following 131-residue polypeptide: Anaerobic and virulence modulator AnvM (131 aa).

Its function is as follows. Plays an essential role by modulating the expression of hundreds of genes including quorum sensing system genes and oxidative stress resistance genes under both aerobic and anaerobic conditions. This is Anaerobic and virulence modulator AnvM from Pseudomonas aeruginosa (strain ATCC 15692 / DSM 22644 / CIP 104116 / JCM 14847 / LMG 12228 / 1C / PRS 101 / PAO1).